A 219-amino-acid polypeptide reads, in one-letter code: Phosphate-specific transport system accessory protein PhoU homolog 1 (219 aa).

It belongs to the PhoU family. In terms of assembly, homodimer.

It localises to the cytoplasm. Its function is as follows. Plays a role in the regulation of phosphate uptake. The sequence is that of Phosphate-specific transport system accessory protein PhoU homolog 1 from Methanothermobacter thermautotrophicus (strain ATCC 29096 / DSM 1053 / JCM 10044 / NBRC 100330 / Delta H) (Methanobacterium thermoautotrophicum).